The chain runs to 470 residues: UDP-glycosyltransferase 75C1 (470 aa).

H16 acts as the Proton acceptor in catalysis. An anthocyanidin is bound at residue H16. UDP-alpha-D-glucose is bound by residues Q347, H362, W365, N366, S367, E370, D386, and Q387.

It belongs to the UDP-glycosyltransferase family. Expressed in flowers and fruits, especially in pulp, and, at lower levels, in seeds.

It is found in the cytoplasm. The protein resides in the nucleus. It carries out the reaction 2-cis-(+)-abscisate + UDP-alpha-D-glucose = beta-D-glucopyranosyl cis-(+)-abscisate + UDP. The catalysed reaction is (indol-3-yl)acetate + UDP-alpha-D-glucose = 1-O-(indol-3-ylacetyl)-beta-D-glucose + UDP. Its function is as follows. Glucosyltransferase acting on both abscisic acid (ABA) and auxin (IAA). Required for ABA-mediated fruit ripening, seed germination, and negative responses to drought. The chain is UDP-glycosyltransferase 75C1 from Solanum lycopersicum (Tomato).